Reading from the N-terminus, the 239-residue chain is Ribose-5-phosphate isomerase A (239 aa).

Substrate is bound by residues 30–33 (SGST), 87–90 (DGAD), and 100–103 (KGGG). Glu109 serves as the catalytic Proton acceptor. Lys127 serves as a coordination point for substrate.

This sequence belongs to the ribose 5-phosphate isomerase family. As to quaternary structure, homodimer.

The enzyme catalyses aldehydo-D-ribose 5-phosphate = D-ribulose 5-phosphate. It functions in the pathway carbohydrate degradation; pentose phosphate pathway; D-ribose 5-phosphate from D-ribulose 5-phosphate (non-oxidative stage): step 1/1. Functionally, catalyzes the reversible conversion of ribose-5-phosphate to ribulose 5-phosphate. This Synechococcus sp. (strain CC9605) protein is Ribose-5-phosphate isomerase A.